The following is a 338-amino-acid chain: 6-phosphogluconolactonase (338 aa).

This sequence belongs to the cycloisomerase 2 family.

The enzyme catalyses 6-phospho-D-glucono-1,5-lactone + H2O = 6-phospho-D-gluconate + H(+). It participates in carbohydrate degradation; pentose phosphate pathway; D-ribulose 5-phosphate from D-glucose 6-phosphate (oxidative stage): step 2/3. Functionally, catalyzes the hydrolysis of 6-phosphogluconolactone to 6-phosphogluconate. The polypeptide is 6-phosphogluconolactonase (Blochmanniella floridana).